Reading from the N-terminus, the 312-residue chain is uncharacterized protein (312 aa).

Basic and acidic residues-rich tracts occupy residues 1 to 17 (MAKY…EQLE) and 28 to 39 (PDRDGPRHSAKL). The interval 1-39 (MAKYDHLELVRLPEQLERRKHGGGSPPPDRDGPRHSAKL) is disordered.

This is an uncharacterized protein from Sinorhizobium fredii (strain NBRC 101917 / NGR234).